The primary structure comprises 510 residues: Maturase K (510 aa).

This sequence belongs to the intron maturase 2 family. MatK subfamily.

It is found in the plastid. Its subcellular location is the chloroplast. Functionally, usually encoded in the trnK tRNA gene intron. Probably assists in splicing its own and other chloroplast group II introns. In Populus trichocarpa (Western balsam poplar), this protein is Maturase K.